A 384-amino-acid chain; its full sequence is Transcription factor iacI (384 aa).

It is found in the nucleus. Functionally, transcription factor; part of the gene cluster that mediates the biosynthesis of iso-A82775C, a enylepoxycyclohexane and biosynthetic precursor of the chloropestolide anticancer natural products. This chain is Transcription factor iacI, found in Pestalotiopsis fici (strain W106-1 / CGMCC3.15140).